Reading from the N-terminus, the 156-residue chain is Ribosomal RNA large subunit methyltransferase H (156 aa).

Residues Leu73, Gly104, and 123–128 (VSSLTL) contribute to the S-adenosyl-L-methionine site.

This sequence belongs to the RNA methyltransferase RlmH family. In terms of assembly, homodimer.

The protein resides in the cytoplasm. The enzyme catalyses pseudouridine(1915) in 23S rRNA + S-adenosyl-L-methionine = N(3)-methylpseudouridine(1915) in 23S rRNA + S-adenosyl-L-homocysteine + H(+). Specifically methylates the pseudouridine at position 1915 (m3Psi1915) in 23S rRNA. The protein is Ribosomal RNA large subunit methyltransferase H of Burkholderia thailandensis (strain ATCC 700388 / DSM 13276 / CCUG 48851 / CIP 106301 / E264).